The chain runs to 145 residues: MIALIQRVTRASVTVEDEVTGEIGLGLLVLLGVEKEDDEQKANRLCERVLGYRIFSDADGKMNLNVQQAGGSVLVVSQFTLAADTERGMRPSFSGGAAPDRAQALYEYFVERCRQQAINTQTGRFAADMQVELVNDGPVTFWLQV.

A Gly-cisPro motif, important for rejection of L-amino acids motif is present at residues 137-138 (GP).

Belongs to the DTD family. As to quaternary structure, homodimer.

Its subcellular location is the cytoplasm. It catalyses the reaction glycyl-tRNA(Ala) + H2O = tRNA(Ala) + glycine + H(+). The catalysed reaction is a D-aminoacyl-tRNA + H2O = a tRNA + a D-alpha-amino acid + H(+). Its function is as follows. An aminoacyl-tRNA editing enzyme that deacylates mischarged D-aminoacyl-tRNAs. Also deacylates mischarged glycyl-tRNA(Ala), protecting cells against glycine mischarging by AlaRS. Acts via tRNA-based rather than protein-based catalysis; rejects L-amino acids rather than detecting D-amino acids in the active site. By recycling D-aminoacyl-tRNA to D-amino acids and free tRNA molecules, this enzyme counteracts the toxicity associated with the formation of D-aminoacyl-tRNA entities in vivo and helps enforce protein L-homochirality. This Salmonella paratyphi C (strain RKS4594) protein is D-aminoacyl-tRNA deacylase.